Here is a 411-residue protein sequence, read N- to C-terminus: Translation initiation factor 2 subunit gamma (411 aa).

Residues 9–203 (QAEVNIGMVG…AIEEFIPTPK (195 aa)) enclose the tr-type G domain. A G1 region spans residues 18–25 (GHVDHGKT). Residues aspartate 21, threonine 25, glycine 46, and threonine 48 each contribute to the Mg(2+) site. 21 to 26 (DHGKTT) contributes to the GTP binding site. Residues 46-50 (GITIK) form a G2 region. Zn(2+) is bound by residues cysteine 61, cysteine 64, cysteine 73, and cysteine 76. The interval 90–93 (DSPG) is G3. Residues 146–149 (NKIE) and 181–183 (SAL) each bind GTP. Residues 146–149 (NKIE) are G4. Residues 181-183 (SAL) are G5.

This sequence belongs to the TRAFAC class translation factor GTPase superfamily. Classic translation factor GTPase family. EIF2G subfamily. As to quaternary structure, heterotrimer composed of an alpha, a beta and a gamma chain. It depends on Mg(2+) as a cofactor.

It carries out the reaction GTP + H2O = GDP + phosphate + H(+). Its function is as follows. eIF-2 functions in the early steps of protein synthesis by forming a ternary complex with GTP and initiator tRNA. This Pyrococcus furiosus (strain ATCC 43587 / DSM 3638 / JCM 8422 / Vc1) protein is Translation initiation factor 2 subunit gamma.